The sequence spans 373 residues: Acyl-CoA dehydrogenase FadE27 (373 aa).

Positions 251, 327, and 331 each coordinate FAD.

This sequence belongs to the acyl-CoA dehydrogenase family. In terms of assembly, heterotetramer (dimer of heterodimers) composed of FadE26 and FadE27. It depends on FAD as a cofactor.

It carries out the reaction (25S)-3-oxocholest-4-en-26-oyl-CoA + A = 3-oxo-cholest-4,24-dien-26-oyl-CoA + AH2. The protein operates within steroid metabolism; cholesterol degradation. With respect to regulation, uncompetitively inhibited by high concentration of 3-OCS-CoA. Its function is as follows. Involved in the first cycle of side chain dehydrogenation in the beta-oxidation of cholesterol catabolism. It contributes partly to the virulence by increasing the efficiency of beta-oxidation. Catalyzes the dehydrogenation of acyl-CoA ester side chains of (25S)-3-oxo-cholest-4-en-26-oyl-CoA (3-OCS-CoA) to yield (24E)-3-oxo-cholest-4,24-dien-26-oyl-CoA. Also able to dehydrogenate steroyl-CoA such as 3-oxo-chol-4-en-24-oyl-CoA (3-OCO-CoA) as well as 3-oxo-4-pregnene-20-carboxyl-CoA (3-OPC-CoA). It dehydrogenates only (25S)-OCS-CoA diastereomer. This chain is Acyl-CoA dehydrogenase FadE27 (fadE27), found in Mycobacterium tuberculosis (strain ATCC 25618 / H37Rv).